We begin with the raw amino-acid sequence, 541 residues long: Halolysin-like extracellular serine protease Nep (541 aa).

Positions 1–33 form a signal peptide, tat-type signal; the sequence is MTRDTNSNVGRRSVLKAASALGAFLGLGGVASA. Residues 34 to 121 constitute a propeptide that is removed on maturation; sequence TPGREPGPKK…DNATYETLEV (88 aa). Residues 130-405 enclose the Peptidase S8 domain; it reads QYAPQQVNCE…YGRVDAELAV (276 aa). Catalysis depends on charge relay system residues Asp157, His198, and Ser351. Residues 403–453 are disordered; that stretch reads LAVTTDPDNGDDDDDDDDDEDDPGDGECGDETNTATADGELSGGWGGNPSD. Over residues 410–432 the composition is skewed to acidic residues; the sequence is DNGDDDDDDDDDEDDPGDGECGD.

It belongs to the peptidase S8 family. In terms of assembly, monomer. In terms of processing, exported by the Tat system. The position of the signal peptide cleavage has not been experimentally proven. After transport across the membrane, the propeptide is probably processed autocatalytically, yielding the mature fully active protease.

The protein localises to the secreted. With respect to regulation, dependent on high salt concentrations for activity and stability. Strongly inhibited by the serine protease inhibitors diisopropyl fluorophosphate (DFP), phenylmethyl sulfonylfluoride (PMSF) and chymostatin. Also inhibited by denaturing agents such as SDS, urea, and HCl guanidinium. Activated by thiol-containing reducing agents such as dithiotreitol (DTT) and 2-mercaptoethanol. Serine protease that hydrolyzes large proteins such as casein and gelatin. Cleaves preferentially at the carboxyl terminus of Phe, Tyr or Leu. Is also able to catalyze peptide synthesis under different salt concentrations in the presence of dimethyl sulfoxide (DMSO). This is Halolysin-like extracellular serine protease Nep from Natrialba magadii.